We begin with the raw amino-acid sequence, 368 residues long: Phospho-N-acetylmuramoyl-pentapeptide-transferase (368 aa).

The next 9 helical transmembrane spans lie at 30–50 (AAAI…IRYL), 72–92 (LPTM…FLWA), 98–118 (HVWL…IDDY), 139–159 (ISLG…AVLL), 170–190 (LSID…TAVS), 201–221 (GLAS…SYLA), 238–258 (GGEI…FLWF), 264–286 (EIIM…ALLI), and 345–365 (KIVI…LMTL).

Belongs to the glycosyltransferase 4 family. MraY subfamily. Mg(2+) serves as cofactor.

The protein resides in the cell inner membrane. The enzyme catalyses UDP-N-acetyl-alpha-D-muramoyl-L-alanyl-gamma-D-glutamyl-meso-2,6-diaminopimeloyl-D-alanyl-D-alanine + di-trans,octa-cis-undecaprenyl phosphate = di-trans,octa-cis-undecaprenyl diphospho-N-acetyl-alpha-D-muramoyl-L-alanyl-D-glutamyl-meso-2,6-diaminopimeloyl-D-alanyl-D-alanine + UMP. Its pathway is cell wall biogenesis; peptidoglycan biosynthesis. Its function is as follows. Catalyzes the initial step of the lipid cycle reactions in the biosynthesis of the cell wall peptidoglycan: transfers peptidoglycan precursor phospho-MurNAc-pentapeptide from UDP-MurNAc-pentapeptide onto the lipid carrier undecaprenyl phosphate, yielding undecaprenyl-pyrophosphoryl-MurNAc-pentapeptide, known as lipid I. The protein is Phospho-N-acetylmuramoyl-pentapeptide-transferase of Chlorobium phaeobacteroides (strain DSM 266 / SMG 266 / 2430).